The chain runs to 359 residues: Tricarboxylate transport protein A, mitochondrial (359 aa).

Solcar repeat units follow at residues 71–159 (THPW…LSNP), 170–256 (KASL…LRNW), and 266–351 (MHPL…VVKL). Transmembrane regions (helical) follow at residues 77 to 97 (IFAG…TEYV), 171 to 191 (ASLL…VCPM), 269 to 289 (LVTA…NTPL), and 336 to 356 (LDVA…NNVW).

The protein belongs to the mitochondrial carrier (TC 2.A.29) family. In terms of processing, possesses a short cleavable presequence, which, however, is found to be dispensable both for targeting to mitochondria and insertion into the inner membrane. However, the presequence is required to keep SLC25A1 in a soluble state and thus in an import-competent state. Mature SLC25A1 lacking the presequence is prone to aggregation.

It is found in the mitochondrion inner membrane. It catalyses the reaction (S)-malate(in) + citrate(out) = (S)-malate(out) + citrate(in). The enzyme catalyses D-threo-isocitrate(in) + citrate(out) = D-threo-isocitrate(out) + citrate(in). It carries out the reaction citrate(out) + succinate(in) = citrate(in) + succinate(out). The catalysed reaction is cis-aconitate(in) + citrate(out) = cis-aconitate(out) + citrate(in). It catalyses the reaction trans-aconitate(in) + citrate(out) = trans-aconitate(out) + citrate(in). The enzyme catalyses phosphoenolpyruvate(in) + citrate(out) = phosphoenolpyruvate(out) + citrate(in). It carries out the reaction maleate(in) + citrate(out) = maleate(out) + citrate(in). Mitochondrial electroneutral antiporter that exports citrate from the mitochondria into the cytosol in exchange for malate. Also able to mediate the exchange of citrate for isocitrate, phosphoenolpyruvate, cis-aconitate and to a lesser extent trans-aconitate, maleate and succinate. In the cytoplasm, citrate plays important roles in fatty acid and sterol synthesis, regulation of glycolysis, protein acetylation, and other physiopathological processes. The polypeptide is Tricarboxylate transport protein A, mitochondrial (Danio rerio (Zebrafish)).